We begin with the raw amino-acid sequence, 477 residues long: Aspartyl/glutamyl-tRNA(Asn/Gln) amidotransferase subunit B (477 aa).

The protein belongs to the GatB/GatE family. GatB subfamily. Heterotrimer of A, B and C subunits.

The enzyme catalyses L-glutamyl-tRNA(Gln) + L-glutamine + ATP + H2O = L-glutaminyl-tRNA(Gln) + L-glutamate + ADP + phosphate + H(+). The catalysed reaction is L-aspartyl-tRNA(Asn) + L-glutamine + ATP + H2O = L-asparaginyl-tRNA(Asn) + L-glutamate + ADP + phosphate + 2 H(+). Functionally, allows the formation of correctly charged Asn-tRNA(Asn) or Gln-tRNA(Gln) through the transamidation of misacylated Asp-tRNA(Asn) or Glu-tRNA(Gln) in organisms which lack either or both of asparaginyl-tRNA or glutaminyl-tRNA synthetases. The reaction takes place in the presence of glutamine and ATP through an activated phospho-Asp-tRNA(Asn) or phospho-Glu-tRNA(Gln). The chain is Aspartyl/glutamyl-tRNA(Asn/Gln) amidotransferase subunit B from Legionella pneumophila (strain Corby).